The following is a 243-amino-acid chain: 1-(5-phosphoribosyl)-5-[(5-phosphoribosylamino)methylideneamino] imidazole-4-carboxamide isomerase (243 aa).

D8 acts as the Proton acceptor in catalysis. The active-site Proton donor is D129.

It belongs to the HisA/HisF family.

Its subcellular location is the cytoplasm. The enzyme catalyses 1-(5-phospho-beta-D-ribosyl)-5-[(5-phospho-beta-D-ribosylamino)methylideneamino]imidazole-4-carboxamide = 5-[(5-phospho-1-deoxy-D-ribulos-1-ylimino)methylamino]-1-(5-phospho-beta-D-ribosyl)imidazole-4-carboxamide. It functions in the pathway amino-acid biosynthesis; L-histidine biosynthesis; L-histidine from 5-phospho-alpha-D-ribose 1-diphosphate: step 4/9. This is 1-(5-phosphoribosyl)-5-[(5-phosphoribosylamino)methylideneamino] imidazole-4-carboxamide isomerase from Azorhizobium caulinodans (strain ATCC 43989 / DSM 5975 / JCM 20966 / LMG 6465 / NBRC 14845 / NCIMB 13405 / ORS 571).